A 403-amino-acid polypeptide reads, in one-letter code: RILP-like protein 1 (403 aa).

Position 7 is a phosphoserine (Ser-7). Residues 10-97 form the RH1 domain; the sequence is AAESALEKNV…RLERMDRIEK (88 aa). The residue at position 47 (Cys-47) is an S-nitrosocysteine. Residues 76-265 are a coiled coil; the sequence is ELDELRLELD…GELNQNGEEE (190 aa). In terms of domain architecture, RH2 spans 291-356; sequence RPRFTLQELR…PQPESGIKRL (66 aa). Residues 329–348 form a disordered region; it reads EEENQIPQPPPIAHPRMSPQ.

Belongs to the RILPL family. Interacts (when S-nitrosylated) with GAPDH. Interacts with RAB8A; interaction is dependent on the phosphorylation of 'Thr-72' of RAB8A. Interacts with RAB10 and RAB12; the interaction is dependent on the phosphorylation of 'Thr-73' of RAB10, and 'Ser-105' of RAB12. In terms of processing, S-nitrosylation is required for the interaction with GAPDH.

It localises to the cytoplasm. The protein resides in the cytosol. The protein localises to the cytoskeleton. It is found in the microtubule organizing center. Its subcellular location is the centrosome. It localises to the centriole. The protein resides in the cilium basal body. Plays a role in the regulation of cell shape and polarity. Plays a role in cellular protein transport, including protein transport away from primary cilia. Neuroprotective protein, which acts by sequestring GAPDH in the cytosol and prevent the apoptotic function of GAPDH in the nucleus. Competes with SIAH1 for binding GAPDH. Does not regulate lysosomal morphology and distribution. Binds to RAB10 following LRRK2-mediated RAB10 phosphorylation which leads to inhibition of ciliogenesis. This Bos taurus (Bovine) protein is RILP-like protein 1 (RILPL1).